Consider the following 472-residue polypeptide: Glutamate--tRNA ligase (472 aa).

The 'HIGH' region signature appears at 8-18 (PSPTGFLHIGS). A 'KMSKS' region motif is present at residues 239–243 (KLSKR). Residue Lys242 participates in ATP binding.

It belongs to the class-I aminoacyl-tRNA synthetase family. Glutamate--tRNA ligase type 1 subfamily. As to quaternary structure, monomer.

It localises to the cytoplasm. The enzyme catalyses tRNA(Glu) + L-glutamate + ATP = L-glutamyl-tRNA(Glu) + AMP + diphosphate. Catalyzes the attachment of glutamate to tRNA(Glu) in a two-step reaction: glutamate is first activated by ATP to form Glu-AMP and then transferred to the acceptor end of tRNA(Glu). The polypeptide is Glutamate--tRNA ligase (Solibacter usitatus (strain Ellin6076)).